A 64-amino-acid chain; its full sequence is Large ribosomal subunit protein bL35 (64 aa).

It belongs to the bacterial ribosomal protein bL35 family.

The protein is Large ribosomal subunit protein bL35 of Ureaplasma parvum serovar 3 (strain ATCC 27815 / 27 / NCTC 11736).